The primary structure comprises 382 residues: Histone acetyltransferase type B subunit 2 (382 aa).

WD repeat units follow at residues 98 to 138 (ENNA…RYSH), 141 to 181 (PHTK…TTFK), 184 to 224 (IQKD…VVSQ), 228 to 268 (ESSN…ENSG), and 275 to 315 (GHSE…EEQQ). The interval 317-321 (EDAED) is interaction with the histone H4 N-terminus. A WD 6 repeat occupies 332 to 372 (GHTAGVSDLSWCPFKDWMIGSVADDNIVHLWEISKKLITNE).

The protein belongs to the WD repeat RBAP46/RBAP48/MSI1 family. Component of the HAT-B complex composed of at least HAT1 and HAT2. The HAT-B complex binds to histone H4 tail.

The protein localises to the cytoplasm. It is found in the nucleus. In terms of biological role, regulatory subunit of the histone acetylase B (HAT-B) complex. The complex acetylates 'Lys-14' of histone H4 which is required for telomeric silencing. The polypeptide is Histone acetyltransferase type B subunit 2 (HAT2) (Candida albicans (strain SC5314 / ATCC MYA-2876) (Yeast)).